A 363-amino-acid polypeptide reads, in one-letter code: Carbamoyl phosphate synthase small chain (363 aa).

The segment at 1 to 172 (MTKRILMLED…AFASPGDGKR (172 aa)) is CPSase. L-glutamine contacts are provided by serine 46, glycine 220, and glycine 222. In terms of domain architecture, Glutamine amidotransferase type-1 spans 172–359 (RVVLVDYGVK…MEMMNGKEEG (188 aa)). Cysteine 247 functions as the Nucleophile in the catalytic mechanism. L-glutamine is bound by residues leucine 248, glutamine 251, asparagine 289, glycine 291, and tyrosine 292. Active-site residues include histidine 332 and glutamate 334.

This sequence belongs to the CarA family. Composed of two chains; the small (or glutamine) chain promotes the hydrolysis of glutamine to ammonia, which is used by the large (or ammonia) chain to synthesize carbamoyl phosphate. Tetramer of heterodimers (alpha,beta)4.

The catalysed reaction is hydrogencarbonate + L-glutamine + 2 ATP + H2O = carbamoyl phosphate + L-glutamate + 2 ADP + phosphate + 2 H(+). It catalyses the reaction L-glutamine + H2O = L-glutamate + NH4(+). It functions in the pathway amino-acid biosynthesis; L-arginine biosynthesis; carbamoyl phosphate from bicarbonate: step 1/1. The protein operates within pyrimidine metabolism; UMP biosynthesis via de novo pathway; (S)-dihydroorotate from bicarbonate: step 1/3. Its function is as follows. Small subunit of the glutamine-dependent carbamoyl phosphate synthetase (CPSase). CPSase catalyzes the formation of carbamoyl phosphate from the ammonia moiety of glutamine, carbonate, and phosphate donated by ATP, constituting the first step of 2 biosynthetic pathways, one leading to arginine and/or urea and the other to pyrimidine nucleotides. The small subunit (glutamine amidotransferase) binds and cleaves glutamine to supply the large subunit with the substrate ammonia. The polypeptide is Carbamoyl phosphate synthase small chain (Listeria monocytogenes serovar 1/2a (strain ATCC BAA-679 / EGD-e)).